Here is a 1403-residue protein sequence, read N- to C-terminus: DNA-directed RNA polymerase subunit beta' (1403 aa).

C69, C71, C84, and C87 together coordinate Zn(2+). Mg(2+) is bound by residues D461, D463, and D465. Residues C818, C891, C898, and C901 each coordinate Zn(2+). The segment at L1384–E1403 is disordered. The segment covering G1391–E1403 has biased composition (acidic residues).

Belongs to the RNA polymerase beta' chain family. As to quaternary structure, the RNAP catalytic core consists of 2 alpha, 1 beta, 1 beta' and 1 omega subunit. When a sigma factor is associated with the core the holoenzyme is formed, which can initiate transcription. The cofactor is Mg(2+). It depends on Zn(2+) as a cofactor.

The enzyme catalyses RNA(n) + a ribonucleoside 5'-triphosphate = RNA(n+1) + diphosphate. In terms of biological role, DNA-dependent RNA polymerase catalyzes the transcription of DNA into RNA using the four ribonucleoside triphosphates as substrates. This is DNA-directed RNA polymerase subunit beta' from Koribacter versatilis (strain Ellin345).